The sequence spans 317 residues: Olfactory receptor 2T27 (317 aa).

At 1–22 (MEQSNYSVYADFILLGLFSNAR) the chain is on the extracellular side. Asparagine 5 is a glycosylation site (N-linked (GlcNAc...) asparagine). A helical membrane pass occupies residues 23 to 43 (FPWLLFALILLVFLTSIASNV). The Cytoplasmic segment spans residues 44 to 60 (VKIILIHIDSRLHTPMY). A helical transmembrane segment spans residues 61–83 (FLLSQLSLRDILYISTIVPKMLV). At 84 to 97 (DQVMSQRAISFAGC) the chain is on the extracellular side. An intrachain disulfide couples cysteine 97 to cysteine 189. A helical membrane pass occupies residues 98–118 (TAQHFLYLTLAGAEFFLLGLM). The Cytoplasmic segment spans residues 119–139 (SYDRYVAICNPLHYPVLMSRK). A helical membrane pass occupies residues 140 to 160 (ICWLIVAAAWLGGSIDGFLLT). The Extracellular segment spans residues 161–197 (PVTMQFPFCASREINHFFCEVPALLKLSCTDTSAYET). A helical transmembrane segment spans residues 198–218 (AMYVCCIMMLLIPFSVISGSY). Residues 219–244 (TRILITVYRMSEAEGRGKAVATCSSH) lie on the Cytoplasmic side of the membrane. Residues 245 to 265 (MVVVSLFYGAAMYTYVLPHSY) traverse the membrane as a helical segment. Residues 266 to 271 (HTPEQD) are Extracellular-facing. Residues 272-292 (KAVSAFYTILTPMLNPLIYSL) form a helical membrane-spanning segment. Residues 293–317 (RNKDVTGALQKVVGRCVSSGKVTTF) lie on the Cytoplasmic side of the membrane.

This sequence belongs to the G-protein coupled receptor 1 family.

It localises to the cell membrane. Functionally, odorant receptor. This chain is Olfactory receptor 2T27 (OR2T27), found in Homo sapiens (Human).